Here is a 200-residue protein sequence, read N- to C-terminus: uncharacterized protein (200 aa).

In terms of biological role, involved in osmoadaptation. This is an uncharacterized protein from Emericella nidulans (strain FGSC A4 / ATCC 38163 / CBS 112.46 / NRRL 194 / M139) (Aspergillus nidulans).